The sequence spans 586 residues: MKQSVSAEQIELKSSLPGSKKVYVDGPREGMKVPMREIEQSDTNGVPNPPIRVYDTSGPYTDPAYKVELEKGIPTPRHSWILERGDVEAYEGREVKPEDDGVKVASKHTPVFPQMDRKPLRAKQGANVTQMHYARNGIIKSEMEYVAIREGVDPEFVRKEIAEGRAILPANINHPEAEPMIIGRNFHVKVNANIGNSAVSSSIAEEVEKMTWATRWGADTIMDLSTGKNIHTTREWIIRNAPVPVGTVPIYQALEKVNGIAEDLTWEVYRDTLIEQAEQGVDYFTIHAGVLLRYIPITAKRTTGIVSRGGSIMAQWCLFHHKENFLYTHFEEICEIMKQYDVSFSLGDGLRPGSIADANDEAQFSELETLGELTKIAWKHDVQVMIEGPGHVPMHLIKENMEKELDICQGAPFYTLGPLTTDIAPGYDHITSAIGAAMIGWFGTAMLCYVTPKEHLGLPNKDDVREGVITYKIAAHAADLAKGHKTAHQRDDALSKARFEFRWRDQFNLSLDPERAMEYHDETLPAEGAKTAHFCSMCGPKFCSMRISHDIREYAKENDLETTEAIEKGMKEKAKEFKETGSHLYQ.

The interval 1-58 (MKQSVSAEQIELKSSLPGSKKVYVDGPREGMKVPMREIEQSDTNGVPNPPIRVYDTSG) is disordered. The span at 22–39 (VYVDGPREGMKVPMREIE) shows a compositional bias: basic and acidic residues. Substrate is bound by residues Asn-193, Met-222, Tyr-251, His-287, 307–309 (SRG), 348–351 (DGLR), and Glu-387. His-391 contributes to the Zn(2+) binding site. Tyr-414 is a substrate binding site. Zn(2+) is bound at residue His-455. [4Fe-4S] cluster-binding residues include Cys-535, Cys-538, and Cys-543.

Belongs to the ThiC family. [4Fe-4S] cluster is required as a cofactor.

It catalyses the reaction 5-amino-1-(5-phospho-beta-D-ribosyl)imidazole + S-adenosyl-L-methionine = 4-amino-2-methyl-5-(phosphooxymethyl)pyrimidine + CO + 5'-deoxyadenosine + formate + L-methionine + 3 H(+). The protein operates within cofactor biosynthesis; thiamine diphosphate biosynthesis. In terms of biological role, catalyzes the synthesis of the hydroxymethylpyrimidine phosphate (HMP-P) moiety of thiamine from aminoimidazole ribotide (AIR) in a radical S-adenosyl-L-methionine (SAM)-dependent reaction. In Bacillus anthracis (strain A0248), this protein is Phosphomethylpyrimidine synthase.